Reading from the N-terminus, the 330-residue chain is Phytanoyl-CoA hydroxylase-interacting protein (330 aa).

Residues 6-115 form the Fibronectin type-III domain; sequence TPHSIEINNI…ETVEFCTGDY (110 aa). N-linked (GlcNAc...) asparagine glycosylation is found at Asn-14 and Asn-325.

This sequence belongs to the PHYHIP family. As to quaternary structure, interacts with PHYH and ADGRB1. As to expression, highly expressed in the brain.

Its function is as follows. Its interaction with PHYH suggests a role in the development of the central system. The sequence is that of Phytanoyl-CoA hydroxylase-interacting protein (PHYHIP) from Homo sapiens (Human).